The following is a 164-amino-acid chain: HTH-type transcriptional regulator IscR (164 aa).

The region spanning 2-131 is the HTH rrf2-type domain; that stretch reads RLTSKGRYAV…NNITLAELVN (130 aa). Residues 28–51 constitute a DNA-binding region (H-T-H motif); it reads LADISERQGISLSYLEQLFSRLRK. Residues Cys-92, Cys-98, and Cys-104 each contribute to the [2Fe-2S] cluster site. A metal cation is bound by residues Cys-92, Cys-98, and Cys-104. Residues 145–164 are disordered; sequence DTRRTANGRPQETINVNLRA. Polar residues predominate over residues 152–164; sequence GRPQETINVNLRA.

It depends on [2Fe-2S] cluster as a cofactor.

In terms of biological role, regulates the transcription of several operons and genes involved in the biogenesis of Fe-S clusters and Fe-S-containing proteins. This Serratia proteamaculans (strain 568) protein is HTH-type transcriptional regulator IscR.